The sequence spans 217 residues: Adenylate kinase (217 aa).

Position 10 to 15 (10 to 15 (GAGKGT)) interacts with ATP. The NMP stretch occupies residues 30-59 (STGDMLRAAVKAGTPLGIEAKKVMDAGGLV). AMP-binding positions include T31, R36, 57-59 (GLV), 85-88 (GFPR), and Q92. The interval 122–159 (GRRAHLASGRTYHVKYNPPKVEGKDDVTGEDLVQRDDD) is LID. ATP contacts are provided by residues R123 and 132-133 (TY). 2 residues coordinate AMP: R156 and R167. Position 203 (G203) interacts with ATP.

It belongs to the adenylate kinase family. As to quaternary structure, monomer.

Its subcellular location is the cytoplasm. The enzyme catalyses AMP + ATP = 2 ADP. It functions in the pathway purine metabolism; AMP biosynthesis via salvage pathway; AMP from ADP: step 1/1. Functionally, catalyzes the reversible transfer of the terminal phosphate group between ATP and AMP. Plays an important role in cellular energy homeostasis and in adenine nucleotide metabolism. This Azoarcus sp. (strain BH72) protein is Adenylate kinase.